Consider the following 887-residue polypeptide: Cytoplasmic aconitate hydratase (887 aa).

Substrate is bound by residues Gln-84 and 204–206; that span reads DSH. [4Fe-4S] cluster is bound by residues Cys-436, Cys-502, and Cys-505. Substrate-binding positions include Arg-535, Arg-540, Arg-697, and 777–778; that span reads SR.

Belongs to the aconitase/IPM isomerase family. As to quaternary structure, interacts with gex-3. [4Fe-4S] cluster serves as cofactor.

Its subcellular location is the cytoplasm. It localises to the cytosol. It carries out the reaction citrate = D-threo-isocitrate. Its function is as follows. Catalyzes the isomerization of citrate to isocitrate via cis-aconitate. Has probably no RNA-binding activity. This Caenorhabditis elegans protein is Cytoplasmic aconitate hydratase (aco-1).